The primary structure comprises 159 residues: 6,7-dimethyl-8-ribityllumazine synthase (159 aa).

Residues Trp30, Thr64–Glu66, and Cys88–Ile90 each bind 5-amino-6-(D-ribitylamino)uracil. A (2S)-2-hydroxy-3-oxobutyl phosphate-binding site is contributed by Glu93–Thr94. His96 functions as the Proton donor in the catalytic mechanism. Phe121 contributes to the 5-amino-6-(D-ribitylamino)uracil binding site. Arg135 contacts (2S)-2-hydroxy-3-oxobutyl phosphate.

The protein belongs to the DMRL synthase family.

The catalysed reaction is (2S)-2-hydroxy-3-oxobutyl phosphate + 5-amino-6-(D-ribitylamino)uracil = 6,7-dimethyl-8-(1-D-ribityl)lumazine + phosphate + 2 H2O + H(+). The protein operates within cofactor biosynthesis; riboflavin biosynthesis; riboflavin from 2-hydroxy-3-oxobutyl phosphate and 5-amino-6-(D-ribitylamino)uracil: step 1/2. Functionally, catalyzes the formation of 6,7-dimethyl-8-ribityllumazine by condensation of 5-amino-6-(D-ribitylamino)uracil with 3,4-dihydroxy-2-butanone 4-phosphate. This is the penultimate step in the biosynthesis of riboflavin. The chain is 6,7-dimethyl-8-ribityllumazine synthase from Cytophaga hutchinsonii (strain ATCC 33406 / DSM 1761 / CIP 103989 / NBRC 15051 / NCIMB 9469 / D465).